Consider the following 148-residue polypeptide: UPAR/Ly6 domain-containing protein bero (148 aa).

Positions 1–23 (MVSALKCSLAVAVMISLACSAYA) are cleaved as a signal peptide. 5 cysteine pairs are disulfide-bonded: cysteine 26/cysteine 72, cysteine 29/cysteine 37, cysteine 51/cysteine 90, cysteine 102/cysteine 116, and cysteine 119/cysteine 124. Residue asparagine 68 is glycosylated (N-linked (GlcNAc...) asparagine). Asparagine 125 is a glycosylation site (N-linked (GlcNAc...) asparagine). A lipid anchor (GPI-anchor amidated asparagine) is attached at asparagine 125. Residues 126–148 (GSSSLAPIAGAILLFFGVARLLA) constitute a propeptide, removed in mature form. Residues 128–148 (SSLAPIAGAILLFFGVARLLA) traverse the membrane as a helical segment.

It belongs to the quiver family.

The protein resides in the cell membrane. Its subcellular location is the membrane. It localises to the perikaryon. It is found in the cell projection. The protein localises to the neuron projection. In terms of biological role, necessary for the maintenance of persistent fluctuating activities and suppression of acute evoked activities in abdominal leucokinin-producing (ABLK) neurons to negatively regulate neuron excitability involved in nociceptive (perception of pain) behavioral responses. The chain is UPAR/Ly6 domain-containing protein bero from Drosophila melanogaster (Fruit fly).